The sequence spans 368 residues: MSGMELSYRRSDLIFKRPAGTSRGVLTSKPTWFVRLDIDGHGGQGEVSLIPGLSLDPEEQIGRELDLLARRLRAEEPIRLRQFLAERGGADFSDYRSVLTDIAGILDSWQVSTDGRFPALRFALEMALLDLLSGGRQEWFASDFTRGEKRIPVNGLIWMGEAAFMQEQIEAKLAEGYGCLKLKIGAIDFDKECALLAGIRESFSPQQLEIRVDANGAFSPANAPQRLKRLSQFHLHSIEQPIRQHQWSEMAALCANSPLAIALDEELIGLGAEQRSAMLDAIRPQYIILKPSLLGGFHYAGQWIELARERGIGFWITSALESNLGLAAIAQWTALYQPTMPQGLGTGQLYTNNLPSNLAVDGGLLGVS.

Catalysis depends on Lys183, which acts as the Proton donor. Residues Asp213, Glu239, and Asp264 each contribute to the Mg(2+) site. The active-site Proton acceptor is Lys290.

This sequence belongs to the mandelate racemase/muconate lactonizing enzyme family. MenC type 1 subfamily. As to quaternary structure, monomer. A divalent metal cation is required as a cofactor.

It catalyses the reaction (1R,6R)-6-hydroxy-2-succinyl-cyclohexa-2,4-diene-1-carboxylate = 2-succinylbenzoate + H2O. It participates in quinol/quinone metabolism; 1,4-dihydroxy-2-naphthoate biosynthesis; 1,4-dihydroxy-2-naphthoate from chorismate: step 4/7. It functions in the pathway cofactor biosynthesis; phylloquinone biosynthesis. In terms of biological role, converts 2-succinyl-6-hydroxy-2,4-cyclohexadiene-1-carboxylate (SHCHC) to 2-succinylbenzoate (OSB). Does not show N-succinylamino acid racemase (NSAR) activity with N-succinyl-L-phenylglycine as substrate. The chain is o-succinylbenzoate synthase from Desulfotalea psychrophila (strain LSv54 / DSM 12343).